Reading from the N-terminus, the 245-residue chain is Biosynthetic peptidoglycan transglycosylase (245 aa).

Residues 20 to 42 (VYAGSVFAGAWLATQLFYLAQIA) traverse the membrane as a helical segment.

This sequence belongs to the glycosyltransferase 51 family.

The protein localises to the cell inner membrane. It catalyses the reaction [GlcNAc-(1-&gt;4)-Mur2Ac(oyl-L-Ala-gamma-D-Glu-L-Lys-D-Ala-D-Ala)](n)-di-trans,octa-cis-undecaprenyl diphosphate + beta-D-GlcNAc-(1-&gt;4)-Mur2Ac(oyl-L-Ala-gamma-D-Glu-L-Lys-D-Ala-D-Ala)-di-trans,octa-cis-undecaprenyl diphosphate = [GlcNAc-(1-&gt;4)-Mur2Ac(oyl-L-Ala-gamma-D-Glu-L-Lys-D-Ala-D-Ala)](n+1)-di-trans,octa-cis-undecaprenyl diphosphate + di-trans,octa-cis-undecaprenyl diphosphate + H(+). It participates in cell wall biogenesis; peptidoglycan biosynthesis. In terms of biological role, peptidoglycan polymerase that catalyzes glycan chain elongation from lipid-linked precursors. This is Biosynthetic peptidoglycan transglycosylase from Burkholderia orbicola (strain MC0-3).